We begin with the raw amino-acid sequence, 307 residues long: Nuclear polyadenylated RNA-binding protein nab2 (307 aa).

Positions 102-135 (STDKSQQSFSVPETSIQPQSSQTPNITSLREEKE) are disordered. The segment covering 105-129 (KSQQSFSVPETSIQPQSSQTPNITS) has biased composition (polar residues). 3 consecutive C3H1-type zinc fingers follow at residues 178–202 (TQEV…HPTP), 217–232 (CASG…VKGH), and 254–268 (CKYK…RFIH). The segment at 274–307 (NMTWRPPSKTEETSLSERSFAVNESEEQLHVPSV) is disordered.

It belongs to the ZC3H14 family.

It localises to the nucleus. RNA-binding protein involved in RNA processing. Acts as a regulator of mRNA stability: binds to mRNAs and pre-mRNAs, preventing their degradation. Involved in the biogenesis of circular RNAs (circRNAs) which are produced by back-splicing circularization of pre-mRNAs. The sequence is that of Nuclear polyadenylated RNA-binding protein nab2 from Schizosaccharomyces pombe (strain 972 / ATCC 24843) (Fission yeast).